We begin with the raw amino-acid sequence, 439 residues long: Cobyrinate a,c-diamide synthase (439 aa).

The tract at residues 214–235 is disordered; that stretch reads ETARAPPEVATTERNTGDSPAD. The region spanning 237 to 428 is the GATase cobBQ-type domain; it reads RVAVAQDSAF…CHCHGESGAF (192 aa). C317 serves as the catalytic Nucleophile.

The protein belongs to the CobB/CbiA family. Mg(2+) is required as a cofactor.

The catalysed reaction is cob(II)yrinate + 2 L-glutamine + 2 ATP + 2 H2O = cob(II)yrinate a,c diamide + 2 L-glutamate + 2 ADP + 2 phosphate + 2 H(+). Its pathway is cofactor biosynthesis; adenosylcobalamin biosynthesis; cob(II)yrinate a,c-diamide from sirohydrochlorin (anaerobic route): step 10/10. In terms of biological role, catalyzes the ATP-dependent amidation of the two carboxylate groups at positions a and c of cobyrinate, using either L-glutamine or ammonia as the nitrogen source. The polypeptide is Cobyrinate a,c-diamide synthase (Haloarcula marismortui (strain ATCC 43049 / DSM 3752 / JCM 8966 / VKM B-1809) (Halobacterium marismortui)).